A 270-amino-acid polypeptide reads, in one-letter code: Release factor glutamine methyltransferase (270 aa).

Residues 113 to 117 (GTGSG), Asp-136, and Asn-177 contribute to the S-adenosyl-L-methionine site. 177 to 180 (NPPY) contacts substrate.

It belongs to the protein N5-glutamine methyltransferase family. PrmC subfamily.

The enzyme catalyses L-glutaminyl-[peptide chain release factor] + S-adenosyl-L-methionine = N(5)-methyl-L-glutaminyl-[peptide chain release factor] + S-adenosyl-L-homocysteine + H(+). Functionally, methylates the class 1 translation termination release factors RF1/PrfA and RF2/PrfB on the glutamine residue of the universally conserved GGQ motif. The sequence is that of Release factor glutamine methyltransferase from Lactococcus lactis subsp. lactis (strain IL1403) (Streptococcus lactis).